Consider the following 379-residue polypeptide: Chaperone protein DnaJ (379 aa).

Residues 5–71 (DYYEILGVSR…EKRAMYDRFG (67 aa)) form the J domain. The segment at 149–231 (GTTIPIEYDR…CGGSGRIRKR (83 aa)) adopts a CR-type zinc-finger fold. Residues Cys162, Cys165, Cys179, Cys182, Cys205, Cys208, Cys219, and Cys222 each contribute to the Zn(2+) site. 4 CXXCXGXG motif repeats span residues 162–169 (CSHCNGEG), 179–186 (CPKCHGTG), 205–212 (CNQCGGTG), and 219–226 (CHVCGGSG).

Belongs to the DnaJ family. In terms of assembly, homodimer. The cofactor is Zn(2+).

It localises to the cytoplasm. Functionally, participates actively in the response to hyperosmotic and heat shock by preventing the aggregation of stress-denatured proteins and by disaggregating proteins, also in an autonomous, DnaK-independent fashion. Unfolded proteins bind initially to DnaJ; upon interaction with the DnaJ-bound protein, DnaK hydrolyzes its bound ATP, resulting in the formation of a stable complex. GrpE releases ADP from DnaK; ATP binding to DnaK triggers the release of the substrate protein, thus completing the reaction cycle. Several rounds of ATP-dependent interactions between DnaJ, DnaK and GrpE are required for fully efficient folding. Also involved, together with DnaK and GrpE, in the DNA replication of plasmids through activation of initiation proteins. The sequence is that of Chaperone protein DnaJ from Thermosipho africanus (strain TCF52B).